The sequence spans 635 residues: Protein phosphatase PP2A regulatory subunit A (635 aa).

Residues 1–27 (MSGARSTTAGAVPSAATTSTTSTTSNS) are compositionally biased toward low complexity. The segment at 1 to 33 (MSGARSTTAGAVPSAATTSTTSTTSNSKDSDSN) is disordered. HEAT repeat units follow at residues 34 to 72 (ESLY…GPER), 73 to 111 (TRNE…GGPQ), 112 to 150 (YATI…SQEQ), 151 to 189 (LFSD…KDDS), 190 to 228 (LRKN…TQNL), 229 to 273 (GLST…NAKG), 274 to 316 (DESH…SNQA), 317 to 356 (YIDE…DPSI), 357 to 395 (ILNK…NKDQ), 396 to 434 (VINN…GIEL), 435 to 473 (LSDS…GMQF), 474 to 512 (FDQQ…GSDW), 513 to 553 (CRDE…SLDV), 554 to 598 (VTEQ…YDAL), and 599 to 632 (IKNT…CQEL).

It belongs to the phosphatase 2A regulatory subunit A family. PP2A exists in several trimeric forms, all of which consist of a core composed of a catalytic subunit associated with a 65 kDa regulatory subunit (PR65) (subunit A). The core complex associates with a third, variable subunit (subunit B), which confers distinct properties to the holoenzyme.

Phosphatase 2A affects a variety of biological processes in the cell such as transcription, cell cycle progression and cellular morphogenesis, and provides an initial identification of critical substrates for this phosphatase. The regulatory subunit may direct the catalytic subunit to distinct, albeit overlapping, subsets of substrates. The sequence is that of Protein phosphatase PP2A regulatory subunit A (TPD3) from Saccharomyces cerevisiae (strain ATCC 204508 / S288c) (Baker's yeast).